The chain runs to 557 residues: TWiK family of potassium channels protein 7 (557 aa).

2 disordered regions span residues 1–34 (MTSS…EALL) and 128–151 (DKSG…EEEE). At 1–165 (MTSSSRGYQR…RKFAKLVLPH (165 aa)) the chain is on the cytoplasmic side. Over residues 134 to 151 (DIDDESDDESKDEDEEEE) the composition is skewed to acidic residues. A helical transmembrane segment spans residues 166-186 (VALVLLTCTYTVIGALIFYSV). N-linked (GlcNAc...) asparagine glycosylation is found at Asn-220 and Asn-237. The segment at residues 270–290 (SIFFAVTVVTTIGYGNPVPVT) is an intramembrane region (pore-forming). Residues 295 to 315 (IWCILFSLLGIPLTLVTIADL) form a helical membrane-spanning segment. At 316-368 (GKFLSEHLVWLYGNYLKLKYLILSRHRKERREHVCEHCHSHGMGHDMNIEEKR) the chain is on the cytoplasmic side. The helical transmembrane segment at 369–389 (IPAFLVLAILIVYTAFGGVLM) threads the bilayer. The segment at residues 397–417 (FFTSFYWSFITMTTVGFGDLM) is an intramembrane region (pore-forming). A helical transmembrane segment spans residues 426–446 (IILLYIILGLAITTMCIDLVG). Over 447-557 (VQYIRKIHYF…SRYSLNRAFK (111 aa)) the chain is Cytoplasmic.

Belongs to the two pore domain potassium channel (TC 1.A.1.8) family.

Its subcellular location is the membrane. The protein is TWiK family of potassium channels protein 7 (twk-7) of Caenorhabditis elegans.